The primary structure comprises 199 residues: NAD(P)H dehydrogenase (quinone) (199 aa).

Residues 4-190 (MLVLYYSAYG…DGARFQGRRV (187 aa)) enclose the Flavodoxin-like domain. FMN contacts are provided by residues 10-15 (SAYGYM) and 78-80 (TRY). Tyrosine 12 is an NAD(+) binding site. Tryptophan 98 is a binding site for substrate. Residues 113 to 119 (STATQHG) and histidine 134 each bind FMN. A disordered region spans residues 158 to 181 (GAPYGMTTTADGDGSRQPSAQELD). Residues 163–177 (MTTTADGDGSRQPSA) show a composition bias toward polar residues.

It belongs to the WrbA family. FMN is required as a cofactor.

It catalyses the reaction a quinone + NADH + H(+) = a quinol + NAD(+). It carries out the reaction a quinone + NADPH + H(+) = a quinol + NADP(+). This Brucella abortus (strain S19) protein is NAD(P)H dehydrogenase (quinone).